Reading from the N-terminus, the 349-residue chain is MELINDFLNLTAPFFTFFGLCFFLPPFYFFKFLQSIFSTIFSENLYGKVVLITGASSGIGEQLAYEYACRGACLALTARRKNRLEEVAEIARELGSPNVVTVHADVSKPDDCRRIVDDTITHFGRLDHLVNNAGMTQISMFENIEDITRTKAVLDTNFWGSVYTTRAALPYLRQSNGKIVAMSSSAAWLTAPRMSFYNASKAALLSFFETMRIELGGDVHITIVTPGYIESELTQGKYFSGEGELIVNQDMRDVQVGPFPVASASGCAKSIVNGVCRKQRYVTEPSWFKVTYLWKVLCPELIEWGCRLLYMTGTGMSEDTALNKRIMDIPGVRSTLYPESIRTPEIKSD.

A helical; Signal-anchor for type II membrane protein transmembrane segment spans residues 10–30 (LTAPFFTFFGLCFFLPPFYFF). NADP(+)-binding positions include 54-80 (GASSGIGEQLAYEYACRGACLALTARR) and Asp-105. Residue Ser-184 coordinates substrate. Tyr-197 (proton acceptor) is an active-site residue. NADP(+)-binding positions include 197 to 201 (YNASK) and Lys-201.

This sequence belongs to the short-chain dehydrogenases/reductases (SDR) family. Expressed in the above-ground part of seedlings, especially in the vascular tissues. Also detected in the buds and silique pedicels. Highly induced in oil-accumulating tissues of maturing seeds.

It localises to the lipid droplet. The protein resides in the membrane. It catalyses the reaction an 11beta-hydroxysteroid + NADP(+) = an 11-oxosteroid + NADPH + H(+). It carries out the reaction 17beta-estradiol + NADP(+) = estrone + NADPH + H(+). The enzyme catalyses corticosterone + NADP(+) = 11-dehydrocorticosterone + NADPH + H(+). The catalysed reaction is cortisone + NADPH + H(+) = cortisol + NADP(+). Functionally, catalyzes 11-beta, 17-beta-hydroxysteroid and reduces 17-beta-ketosteroids. Involved in regulating plant growth and development, probably promoting or mediating brassinosteroid effects. Plays a role during seed maturation. This is 11-beta-hydroxysteroid dehydrogenase 1A (HSD1) from Arabidopsis thaliana (Mouse-ear cress).